The primary structure comprises 395 residues: MLRWQTAGESHGEALVAMIEGLPAGVRISTDDIVSALARRRLGYGRGARMKFEQDKVRLLTGVRHGLTLGSPVAIEIANTEWPKWTEVMSADALDHDLPREGRNAPLSRPRPGHADLTGMRKYGFDDARPVLERSSARETASRVALGEVAKQFLDQAFGIRTVAHVVALGGVQTNPDLPLPTPDDLEALDASPVRTLDKEAEARIIERINEAKKASDTLGGVIEVLAYGVPAGIGTYVESDRRLDAALASAIMGIQAFKGVEIGDGFLEASRPGSQAHDEIVVNADGRIDRLSNRAGGIEGGMSNGQVIRVRGAMKPIPSIPKALRTVDVLTGESAQAINQRSDSTAVPAASVVAEAMVRLTLAKYALDKFGGDSVAETRRNLESYLASWPEHMR.

Residues Arg-40 and Arg-46 each coordinate NADP(+). Residues 99-120 (PREGRNAPLSRPRPGHADLTGM) are disordered. FMN is bound by residues 134–136 (RSS), 256–257 (QA), Gly-301, 316–320 (KPIPS), and Arg-342.

It belongs to the chorismate synthase family. As to quaternary structure, homotetramer. FMNH2 is required as a cofactor.

It catalyses the reaction 5-O-(1-carboxyvinyl)-3-phosphoshikimate = chorismate + phosphate. It participates in metabolic intermediate biosynthesis; chorismate biosynthesis; chorismate from D-erythrose 4-phosphate and phosphoenolpyruvate: step 7/7. Its function is as follows. Catalyzes the anti-1,4-elimination of the C-3 phosphate and the C-6 proR hydrogen from 5-enolpyruvylshikimate-3-phosphate (EPSP) to yield chorismate, which is the branch point compound that serves as the starting substrate for the three terminal pathways of aromatic amino acid biosynthesis. This reaction introduces a second double bond into the aromatic ring system. The protein is Chorismate synthase of Bifidobacterium longum (strain DJO10A).